A 199-amino-acid chain; its full sequence is Charged multivesicular body protein 1B2 (199 aa).

Residues 15–47 adopt a coiled-coil conformation; it reads AKELNRNAKKCDKEEKAEKAKIKKAIQKGNTEV. Positions 132–156 are interaction with IST1; the sequence is MEDTMSSTTTLTTPQNQVDMLLQEM. The tract at residues 167-199 is disordered; sequence ELPQGQTGSVGASVASTEQDELSQRLARLRDQV. Polar residues predominate over residues 170–183; the sequence is QGQTGSVGASVAST. The interval 174–199 is interaction with SPAST; that stretch reads GSVGASVASTEQDELSQRLARLRDQV. The stretch at 177-199 forms a coiled coil; it reads GASVASTEQDELSQRLARLRDQV. An interaction with VPS4A, MITD1 and STAMBP region spans residues 180–196; that stretch reads VASTEQDELSQRLARLR. The interval 180–199 is interaction with VTA1; the sequence is VASTEQDELSQRLARLRDQV. Residues 183-199 form an interaction with VPS4B region; it reads TEQDELSQRLARLRDQV. An MIT-interacting motif motif is present at residues 186–196; sequence DELSQRLARLR.

It belongs to the SNF7 family. As to quaternary structure, probable peripherally associated component of the endosomal sorting required for transport complex III (ESCRT-III). ESCRT-III components are thought to multimerize to form a flat lattice on the perimeter membrane of the endosome. Several assembly forms of ESCRT-III may exist that interact and act sequentially. Interacts with CHMP1A. Interacts with VTA1; the interaction probably involves the open conformation of CHMP1B. Interacts with CHMP2A. Interacts with VPS4A; the interaction is direct. Interacts with VPS4B; the interaction is direct. Interacts with SPAST (via MIT domain); the interaction is direct. Interacts with IST1. Interacts with MITD1. Interacts with STAMBP.

The protein localises to the cytoplasm. It is found in the cytosol. It localises to the endosome. Its subcellular location is the late endosome membrane. Its function is as follows. Probable peripherally associated component of the endosomal sorting required for transport complex III (ESCRT-III) which is involved in multivesicular bodies (MVBs) formation and sorting of endosomal cargo proteins into MVBs. MVBs contain intraluminal vesicles (ILVs) that are generated by invagination and scission from the limiting membrane of the endosome and mostly are delivered to lysosomes enabling degradation of membrane proteins, such as stimulated growth factor receptors, lysosomal enzymes and lipids. The MVB pathway appears to require the sequential function of ESCRT-O, -I,-II and -III complexes. ESCRT-III proteins mostly dissociate from the invaginating membrane before the ILV is released. The ESCRT machinery also functions in topologically equivalent membrane fission events, such as the terminal stages of cytokinesis. ESCRT-III proteins are believed to mediate the necessary vesicle extrusion and/or membrane fission activities, possibly in conjunction with the AAA ATPase VPS4. Involved in cytokinesis. Involved in recruiting VPS4A and/or VPS4B and SPAST to the midbody of dividing cells. The chain is Charged multivesicular body protein 1B2 from Mus musculus (Mouse).